Reading from the N-terminus, the 360-residue chain is Probable dual-specificity RNA methyltransferase RlmN (360 aa).

Glutamate 91 serves as the catalytic Proton acceptor. The Radical SAM core domain occupies 97–335; it reads QHYGQSVCVT…CVVRQEHGTD (239 aa). The cysteines at positions 104 and 340 are disulfide-linked. [4Fe-4S] cluster-binding residues include cysteine 111, cysteine 115, and cysteine 118. Residues 163-164, serine 195, 218-220, and asparagine 296 each bind S-adenosyl-L-methionine; these read GE and SLH. The S-methylcysteine intermediate role is filled by cysteine 340.

This sequence belongs to the radical SAM superfamily. RlmN family. [4Fe-4S] cluster is required as a cofactor.

It localises to the cytoplasm. The catalysed reaction is adenosine(2503) in 23S rRNA + 2 reduced [2Fe-2S]-[ferredoxin] + 2 S-adenosyl-L-methionine = 2-methyladenosine(2503) in 23S rRNA + 5'-deoxyadenosine + L-methionine + 2 oxidized [2Fe-2S]-[ferredoxin] + S-adenosyl-L-homocysteine. It catalyses the reaction adenosine(37) in tRNA + 2 reduced [2Fe-2S]-[ferredoxin] + 2 S-adenosyl-L-methionine = 2-methyladenosine(37) in tRNA + 5'-deoxyadenosine + L-methionine + 2 oxidized [2Fe-2S]-[ferredoxin] + S-adenosyl-L-homocysteine. In terms of biological role, specifically methylates position 2 of adenine 2503 in 23S rRNA and position 2 of adenine 37 in tRNAs. The protein is Probable dual-specificity RNA methyltransferase RlmN of Streptococcus equi subsp. zooepidemicus (strain H70).